The primary structure comprises 382 residues: Lipid-A-disaccharide synthase (382 aa).

This sequence belongs to the LpxB family.

It catalyses the reaction 2-N,3-O-bis[(3R)-3-hydroxytetradecanoyl]-alpha-D-glucosaminyl 1-phosphate + UDP-2-N,3-O-bis[(3R)-3-hydroxytetradecanoyl]-alpha-D-glucosamine = lipid A disaccharide (E. coli) + UDP + H(+). The catalysed reaction is a lipid X + a UDP-2-N,3-O-bis[(3R)-3-hydroxyacyl]-alpha-D-glucosamine = a lipid A disaccharide + UDP + H(+). It functions in the pathway glycolipid biosynthesis; lipid IV(A) biosynthesis; lipid IV(A) from (3R)-3-hydroxytetradecanoyl-[acyl-carrier-protein] and UDP-N-acetyl-alpha-D-glucosamine: step 5/6. Functionally, condensation of UDP-2,3-diacylglucosamine and 2,3-diacylglucosamine-1-phosphate to form lipid A disaccharide, a precursor of lipid A, a phosphorylated glycolipid that anchors the lipopolysaccharide to the outer membrane of the cell. The sequence is that of Lipid-A-disaccharide synthase from Shigella dysenteriae serotype 1 (strain Sd197).